The following is a 568-amino-acid chain: Natural resistance-associated macrophage protein 2 (568 aa).

Basic and acidic residues predominate over residues 1 to 20; that stretch reads MVLDPEEKIPDDGASGDHGD. The segment at 1 to 45 is disordered; it reads MVLDPEEKIPDDGASGDHGDSASLGAINPAYSNSSLPHSTGDSEE. At 1–69 the chain is on the cytoplasmic side; it reads MVLDPEEKIP…EEYSCFSFRK (69 aa). Over residues 30 to 40 the composition is skewed to polar residues; that stretch reads AYSNSSLPHST. The chain crosses the membrane as a helical span at residues 70–90; sequence LWAFTGPGFLMSIAYLDPGNI. Residues 91–95 are Extracellular-facing; that stretch reads ESDLQ. A helical membrane pass occupies residues 96–117; the sequence is SGAVAGFKLLWVLLLATIVGLL. Over 118-154 the chain is Cytoplasmic; that stretch reads LQRLAARLGVVTGLHLAEVCHRQYPKVPRIILWLMVE. Residues 155–175 traverse the membrane as a helical segment; sequence LAIIGSDMQEVIGSAIAINLL. The Extracellular portion of the chain corresponds to 176-179; sequence SAGR. Residues 180-194 traverse the membrane as a helical segment; sequence VPLYGGVLITIADTF. The Cytoplasmic segment spans residues 195-208; the sequence is VFLFLDKYGLRKLE. The helical transmembrane segment at 209–229 threads the bilayer; the sequence is AFFGFLITIMALTFGYEYVTV. Residues 230-255 are Extracellular-facing; that stretch reads KPSQSQVLRGMFVPSCSGCHTPQVEQ. A helical membrane pass occupies residues 256–276; it reads AVGIVGAVIMPHNMYLHSALV. Topologically, residues 277 to 301 are cytoplasmic; that stretch reads KSRQVNRANKQEVREANKYFFIESC. Residues 302–322 form a helical membrane-spanning segment; that stretch reads IALFVSFIINVFVVSVFAEAF. Topologically, residues 323 to 360 are extracellular; it reads FEKTNEQVVEVCRNSSSPHADLFPNDNSTLAVDIYKGG. 2 N-linked (GlcNAc...) asparagine glycosylation sites follow: Asn-336 and Asn-349. A helical membrane pass occupies residues 361–381; the sequence is VVLGCYFGPAALYIWAVGILA. Residues 382 to 408 lie on the Cytoplasmic side of the membrane; the sequence is AGQSSTMTGTYSGQFVMEGFLNLKWSR. Residues 409–429 traverse the membrane as a helical segment; sequence FARVILTRSIAIIPTLLVAVF. Topologically, residues 430-440 are extracellular; it reads QDVEHLTGMND. The chain crosses the membrane as a helical span at residues 441–461; that stretch reads FLNVLQSLQLPFALIPILTFT. The Cytoplasmic segment spans residues 462–482; the sequence is SLRPVMSEFSNGIGWRIAGGI. A helical transmembrane segment spans residues 483–503; sequence LVLLVCSINMYFVVVYVQELG. Residues 504 to 506 are Extracellular-facing; that stretch reads HVA. A helical membrane pass occupies residues 507–527; the sequence is LYVVAAVVSVAYLGFVFYLGW. Over 528-568 the chain is Cytoplasmic; that stretch reads QCLIALGLSFLDCGRSYHLGLTARPEIYLLNTVDAVSLVSR. A required for early endosome targeting region spans residues 555–559; that stretch reads YLLNT. Leu-556, Ser-564, and Ser-567 each carry phosphoserine.

This sequence belongs to the NRAMP family. In terms of assembly, forms a complex with NDFIP1 and NEDD4L, in cortical neurons, in response to iron and cobalt exposure; this interaction leads to SLC11A2 ubiquitination by NEDD4L and proteasome-dependent degradation. Interacts with NDFIP1, NDFIP2 and WWP2; this interaction leads to SLC11A2 ubiquitination by WWP2 and subsequent proteasome-dependent degradation. Interacts with COX2 and TOM6 at the outer mitochondrion membrane. Interacts with ARRDC1; this interaction regulates the incorporation of SLC11A2 into extracellular vesicles through an ubiquitination-dependent mechanism. Interacts with ARRDC4; controls the incorporation of SLC11A2 into extracellular vesicles through an ubiquitination-dependent mechanism. Ubiquitinated by WWP2. In terms of processing, N-glycosylated. As to expression, ubiquitous. Expressed in proximal intestine, kidney and brain.

It localises to the golgi apparatus. The protein localises to the trans-Golgi network membrane. Its subcellular location is the early endosome membrane. The protein resides in the recycling endosome membrane. It is found in the late endosome membrane. It localises to the lysosome membrane. The protein localises to the apical cell membrane. Its subcellular location is the mitochondrion outer membrane. The protein resides in the extracellular vesicle membrane. The catalysed reaction is Fe(2+)(in) + H(+)(in) = Fe(2+)(out) + H(+)(out). It catalyses the reaction Cd(2+)(out) + H(+)(out) = Cd(2+)(in) + H(+)(in). It carries out the reaction Co(2+)(out) + H(+)(out) = Co(2+)(in) + H(+)(in). The enzyme catalyses Mn(2+)(in) + H(+)(in) = Mn(2+)(out) + H(+)(out). The catalysed reaction is Zn(2+)(out) + H(+)(out) = Zn(2+)(in) + H(+)(in). It catalyses the reaction Ni(2+)(out) + H(+)(out) = Ni(2+)(in) + H(+)(in). It carries out the reaction H(+)(in) = H(+)(out). The enzyme catalyses Fe(2+)(in) = Fe(2+)(out). Its activity is regulated as follows. Inhibited by 2-(3-carbamimidoylsulfanylmethyl-benzyl)-isothiourea. In terms of biological role, proton-coupled metal ion symporter operating with a proton to metal ion stoichiometry of 1:1. Selectively transports various divalent metal cations, in decreasing affinity: Cd(2+) &gt; Fe(2+) &gt; Co(2+), Mn(2+) &gt;&gt; Zn(2+), Ni(2+), VO(2+). Essential for maintenance of iron homeostasis by modulating intestinal absorption of dietary Fe(2+) and TF-associated endosomal Fe(2+) transport in erythroid precursors and other cells. Enables Fe(2+) and Mn(2+) ion entry into mitochondria, and is thus expected to promote mitochondrial heme synthesis, iron-sulfur cluster biogenesis and antioxidant defense. Can mediate uncoupled fluxes of either protons or metal ions. The sequence is that of Natural resistance-associated macrophage protein 2 (Slc11a2) from Rattus norvegicus (Rat).